The following is a 130-amino-acid chain: Small ribosomal subunit protein uS9 (130 aa).

Positions 105-130 (TRDSRMVERKKPGLKKARRASQFSKR) are disordered. Over residues 106-115 (RDSRMVERKK) the composition is skewed to basic and acidic residues. Residues 116-130 (PGLKKARRASQFSKR) show a composition bias toward basic residues.

The protein belongs to the universal ribosomal protein uS9 family.

This Oenococcus oeni (strain ATCC BAA-331 / PSU-1) protein is Small ribosomal subunit protein uS9.